A 325-amino-acid polypeptide reads, in one-letter code: MVISVLGAGAWGTAIAISLSGKKNVILWTRNKAIFESIKEKRESDKLPDCPISDNVSVKLAIEDAVNASVIILAVPTQSLREICHQLNDCNLKKNVAIILACKGIEKSTLKLPSEVVNEVLPNNPLAVFSGPSFAIEVARKLPYSMVLACQNEVLGLKLVSELQQENIKLYLSSDVIGIQVCAALKNVFAIACGVVLGRFGFNAHAALITKSMSEIKALYSAKVGDGNVDINTLLGPACLGDLVVTCTSLNSRNLSFGSKVANSNGSSAQQILSEGKSVIEGFNTAKSAFDLAEKLKIKMPICEAIYRLLYENTSIEDTISVLVN.

Residues W11, R30, and K103 each contribute to the NADPH site. Sn-glycerol 3-phosphate is bound by residues K103, G131, and S133. A135 provides a ligand contact to NADPH. Residues K186, D242, S252, R253, and N254 each contribute to the sn-glycerol 3-phosphate site. Residue K186 is the Proton acceptor of the active site. R253 contacts NADPH. NADPH is bound by residues V279 and E281.

This sequence belongs to the NAD-dependent glycerol-3-phosphate dehydrogenase family.

The protein resides in the cytoplasm. The enzyme catalyses sn-glycerol 3-phosphate + NAD(+) = dihydroxyacetone phosphate + NADH + H(+). The catalysed reaction is sn-glycerol 3-phosphate + NADP(+) = dihydroxyacetone phosphate + NADPH + H(+). It functions in the pathway membrane lipid metabolism; glycerophospholipid metabolism. In terms of biological role, catalyzes the reduction of the glycolytic intermediate dihydroxyacetone phosphate (DHAP) to sn-glycerol 3-phosphate (G3P), the key precursor for phospholipid synthesis. The protein is Glycerol-3-phosphate dehydrogenase [NAD(P)+] of Wolbachia pipientis subsp. Culex pipiens (strain wPip).